The primary structure comprises 181 residues: RNA pyrophosphohydrolase (181 aa).

The Nudix hydrolase domain occupies 6–150; it reads GYRPNVGIII…KCEVYRCALK (145 aa). The Nudix box signature appears at 38-59; that stretch reads GGIKEGETPEQAMYRELYEEVG.

Belongs to the Nudix hydrolase family. RppH subfamily. It depends on a divalent metal cation as a cofactor.

Functionally, accelerates the degradation of transcripts by removing pyrophosphate from the 5'-end of triphosphorylated RNA, leading to a more labile monophosphorylated state that can stimulate subsequent ribonuclease cleavage. In Psychromonas ingrahamii (strain DSM 17664 / CCUG 51855 / 37), this protein is RNA pyrophosphohydrolase.